We begin with the raw amino-acid sequence, 133 residues long: Small ribosomal subunit protein uS8 (133 aa).

The tract at residues 1-28 (MANHDPISDMLTRIRNASEKRHEKTKVP) is disordered. Positions 16 to 26 (NASEKRHEKTK) are enriched in basic and acidic residues.

This sequence belongs to the universal ribosomal protein uS8 family. As to quaternary structure, part of the 30S ribosomal subunit. Contacts proteins S5 and S12.

Its function is as follows. One of the primary rRNA binding proteins, it binds directly to 16S rRNA central domain where it helps coordinate assembly of the platform of the 30S subunit. The chain is Small ribosomal subunit protein uS8 from Prochlorococcus marinus (strain NATL2A).